Reading from the N-terminus, the 63-residue chain is Transmembrane protein 033R (63 aa).

The protein is Transmembrane protein 033R of Dryophytes versicolor (chameleon treefrog).